A 368-amino-acid chain; its full sequence is UDP-N-acetylenolpyruvoylglucosamine reductase (368 aa).

The FAD-binding PCMH-type domain occupies 32–199 (IGGKPRSAVR…LAIELQLLTD (168 aa)). Arginine 177 is a catalytic residue. Serine 257 acts as the Proton donor in catalysis. Glutamate 358 is a catalytic residue.

The protein belongs to the MurB family. It depends on FAD as a cofactor.

The protein resides in the cytoplasm. The enzyme catalyses UDP-N-acetyl-alpha-D-muramate + NADP(+) = UDP-N-acetyl-3-O-(1-carboxyvinyl)-alpha-D-glucosamine + NADPH + H(+). Its pathway is cell wall biogenesis; peptidoglycan biosynthesis. Its function is as follows. Cell wall formation. The chain is UDP-N-acetylenolpyruvoylglucosamine reductase from Corynebacterium glutamicum (strain R).